Here is a 372-residue protein sequence, read N- to C-terminus: Chaperone protein DnaJ (372 aa).

Positions 5–70 (SYYDILGVSK…KKRQAYDQFG (66 aa)) constitute a J domain. Residues 140–218 (GREYKIEIPR…CGGQGLQEKR (79 aa)) form a CR-type zinc finger. Zn(2+) contacts are provided by Cys-153, Cys-156, Cys-170, Cys-173, Cys-192, Cys-195, Cys-206, and Cys-209. CXXCXGXG motif repeat units follow at residues 153-160 (CVDCNGSG), 170-177 (CPDCGGSG), 192-199 (CPTCRGKG), and 206-213 (CRSCGGQG).

It belongs to the DnaJ family. As to quaternary structure, homodimer. Requires Zn(2+) as cofactor.

It localises to the cytoplasm. Its function is as follows. Participates actively in the response to hyperosmotic and heat shock by preventing the aggregation of stress-denatured proteins and by disaggregating proteins, also in an autonomous, DnaK-independent fashion. Unfolded proteins bind initially to DnaJ; upon interaction with the DnaJ-bound protein, DnaK hydrolyzes its bound ATP, resulting in the formation of a stable complex. GrpE releases ADP from DnaK; ATP binding to DnaK triggers the release of the substrate protein, thus completing the reaction cycle. Several rounds of ATP-dependent interactions between DnaJ, DnaK and GrpE are required for fully efficient folding. Also involved, together with DnaK and GrpE, in the DNA replication of plasmids through activation of initiation proteins. The chain is Chaperone protein DnaJ from Leptospira interrogans serogroup Icterohaemorrhagiae serovar copenhageni (strain Fiocruz L1-130).